Here is a 94-residue protein sequence, read N- to C-terminus: uncharacterized protein (94 aa).

The helical transmembrane segment at 13-33 (IVICLTTIISVTIFYILVSFF) threads the bilayer.

The protein localises to the membrane. This is an uncharacterized protein from Dictyostelium discoideum (Social amoeba).